We begin with the raw amino-acid sequence, 37 residues long: MAFFQKLTGQEQVNRDLLLLLCIGGFYTLGVSLSNTF.

This is an uncharacterized protein from Bacillus caldotenax.